The chain runs to 369 residues: tRNA/tmRNA (uracil-C(5))-methyltransferase (369 aa).

Residues glutamine 193, tyrosine 221, asparagine 226, glutamate 242, and aspartate 302 each coordinate S-adenosyl-L-methionine. The Nucleophile role is filled by cysteine 327. Glutamate 361 functions as the Proton acceptor in the catalytic mechanism.

Belongs to the class I-like SAM-binding methyltransferase superfamily. RNA M5U methyltransferase family. TrmA subfamily.

It catalyses the reaction uridine(54) in tRNA + S-adenosyl-L-methionine = 5-methyluridine(54) in tRNA + S-adenosyl-L-homocysteine + H(+). The catalysed reaction is uridine(341) in tmRNA + S-adenosyl-L-methionine = 5-methyluridine(341) in tmRNA + S-adenosyl-L-homocysteine + H(+). Dual-specificity methyltransferase that catalyzes the formation of 5-methyluridine at position 54 (m5U54) in all tRNAs, and that of position 341 (m5U341) in tmRNA (transfer-mRNA). The polypeptide is tRNA/tmRNA (uracil-C(5))-methyltransferase (Actinobacillus succinogenes (strain ATCC 55618 / DSM 22257 / CCUG 43843 / 130Z)).